We begin with the raw amino-acid sequence, 930 residues long: Kinesin-like protein KIN-7J (930 aa).

The Kinesin motor domain occupies 9 to 273; sequence KILVSVRVRP…TLGTVIRKLR (265 aa). 95 to 102 contacts ATP; the sequence is GQTSSGKT. 2 disordered regions span residues 449–569 and 655–686; these read LKNS…IGTD and MQTK…SLKD. Residues 459 to 468 show a composition bias toward low complexity; it reads SVEAQESQES. Basic and acidic residues-rich tracts occupy residues 473 to 482 and 533 to 558; these read EQMKNEERKM and AKLD…KDCN. A compositionally biased stretch (low complexity) spans 666-681; it reads TSSISFDSGSSTSIDT. A Glycyl lysine isopeptide (Lys-Gly) (interchain with G-Cter in ubiquitin) cross-link involves residue K805.

Belongs to the TRAFAC class myosin-kinesin ATPase superfamily. Kinesin family. KIN-7 subfamily.

The protein is Kinesin-like protein KIN-7J of Arabidopsis thaliana (Mouse-ear cress).